Reading from the N-terminus, the 445-residue chain is UPF0210 protein SUB1511 (445 aa).

This sequence belongs to the UPF0210 family. Homodimer.

The protein is UPF0210 protein SUB1511 of Streptococcus uberis (strain ATCC BAA-854 / 0140J).